A 501-amino-acid chain; its full sequence is Lysine--tRNA ligase (501 aa).

Residues Glu-402 and Glu-409 each contribute to the Mg(2+) site.

The protein belongs to the class-II aminoacyl-tRNA synthetase family. In terms of assembly, homodimer. The cofactor is Mg(2+).

The protein localises to the cytoplasm. It carries out the reaction tRNA(Lys) + L-lysine + ATP = L-lysyl-tRNA(Lys) + AMP + diphosphate. The protein is Lysine--tRNA ligase of Helicobacter pylori (strain HPAG1).